We begin with the raw amino-acid sequence, 265 residues long: 3-deoxy-manno-octulosonate cytidylyltransferase (265 aa).

This sequence belongs to the KdsB family.

It localises to the cytoplasm. The enzyme catalyses 3-deoxy-alpha-D-manno-oct-2-ulosonate + CTP = CMP-3-deoxy-beta-D-manno-octulosonate + diphosphate. It participates in nucleotide-sugar biosynthesis; CMP-3-deoxy-D-manno-octulosonate biosynthesis; CMP-3-deoxy-D-manno-octulosonate from 3-deoxy-D-manno-octulosonate and CTP: step 1/1. It functions in the pathway bacterial outer membrane biogenesis; lipopolysaccharide biosynthesis. In terms of biological role, activates KDO (a required 8-carbon sugar) for incorporation into bacterial lipopolysaccharide in Gram-negative bacteria. The polypeptide is 3-deoxy-manno-octulosonate cytidylyltransferase (Delftia acidovorans (strain DSM 14801 / SPH-1)).